Reading from the N-terminus, the 198-residue chain is dITP/XTP pyrophosphatase (198 aa).

7–12 (THNPHK) lines the substrate pocket. Mg(2+)-binding residues include Glu-40 and Asp-69. Asp-69 functions as the Proton acceptor in the catalytic mechanism. Substrate is bound by residues Thr-70, 151–154 (FGYD), Lys-174, and 179–180 (HR).

This sequence belongs to the HAM1 NTPase family. Homodimer. The cofactor is Mg(2+).

It carries out the reaction XTP + H2O = XMP + diphosphate + H(+). It catalyses the reaction dITP + H2O = dIMP + diphosphate + H(+). The enzyme catalyses ITP + H2O = IMP + diphosphate + H(+). Its function is as follows. Pyrophosphatase that catalyzes the hydrolysis of nucleoside triphosphates to their monophosphate derivatives, with a high preference for the non-canonical purine nucleotides XTP (xanthosine triphosphate), dITP (deoxyinosine triphosphate) and ITP. Seems to function as a house-cleaning enzyme that removes non-canonical purine nucleotides from the nucleotide pool, thus preventing their incorporation into DNA/RNA and avoiding chromosomal lesions. The chain is dITP/XTP pyrophosphatase from Thermoanaerobacter pseudethanolicus (strain ATCC 33223 / 39E) (Clostridium thermohydrosulfuricum).